We begin with the raw amino-acid sequence, 1661 residues long: Microtubule cross-linking factor 2 (1661 aa).

Residues methionine 1–glycine 187 are disordered. 2 stretches are compositionally biased toward low complexity: residues alanine 76–glycine 94 and leucine 133–glycine 149. A compositionally biased stretch (pro residues) spans glutamine 167–proline 176. Residues proline 211–leucine 240 form a required for association with Golgi apparatus membrane region. Coiled-coil stretches lie at residues leucine 218 to arginine 281 and serine 310 to glutamate 351. The disordered stretch occupies residues glutamate 353–lysine 373. 3 coiled-coil regions span residues leucine 450–histidine 484, isoleucine 820–aspartate 865, and serine 1083–alanine 1117. A Phosphoserine modification is found at serine 1169. The disordered stretch occupies residues alanine 1196–aspartate 1221. A compositionally biased stretch (basic and acidic residues) spans aspartate 1206–proline 1215. The residue at position 1255 (serine 1255) is a Phosphoserine. Disordered regions lie at residues arginine 1432–lysine 1456, arginine 1538–histidine 1563, and histidine 1636–glutamate 1661. Residues glycine 1652 to glutamate 1661 show a composition bias toward basic and acidic residues.

This sequence belongs to the MTCL family. As to quaternary structure, interacts with CLASP1 and CLASP2. The C-terminal 25 kDa form occurs as a monomer. Post-translationally, proteolytically cleaved in primary hepatocytes into a C-terminal 80 kDa form. Proteolytically cleaved into a C-terminal SOGA 25 kDa form that is detected in plasma. Phosphorylated during mitosis in a CDK1-dependent manner.

It localises to the cytoplasm. It is found in the cytoskeleton. The protein localises to the golgi apparatus membrane. Its subcellular location is the midbody. The protein resides in the secreted. Microtubule-associated factor that enables integration of the centrosomal and Golgi-associated microtubules on the Golgi membrane, supporting directional migration. Preferentially acts on the perinuclear microtubules accumulated around the Golgi. Associates with the Golgi membrane through the N-terminal coiled-coil region and directly binds microtubules through the C-terminal domain. Required for faithful chromosome segregation during mitosis. Regulates autophagy by playing a role in the reduction of glucose production in an adiponectin- and insulin-dependent manner. The sequence is that of Microtubule cross-linking factor 2 from Homo sapiens (Human).